We begin with the raw amino-acid sequence, 680 residues long: DNA ligase 1 (680 aa).

Residues 35 to 39 (DAEYD), 84 to 85 (SL), and aspartate 115 each bind NAD(+). Lysine 117 acts as the N6-AMP-lysine intermediate in catalysis. NAD(+) is bound by residues arginine 138, glutamate 175, lysine 295, and lysine 319. Residues cysteine 413, cysteine 416, cysteine 431, and cysteine 436 each contribute to the Zn(2+) site. The region spanning 599 to 680 (REGSQLQGLK…FANLLKGLDR (82 aa)) is the BRCT domain.

Belongs to the NAD-dependent DNA ligase family. LigA subfamily. Mg(2+) is required as a cofactor. Requires Mn(2+) as cofactor.

It carries out the reaction NAD(+) + (deoxyribonucleotide)n-3'-hydroxyl + 5'-phospho-(deoxyribonucleotide)m = (deoxyribonucleotide)n+m + AMP + beta-nicotinamide D-nucleotide.. DNA ligase that catalyzes the formation of phosphodiester linkages between 5'-phosphoryl and 3'-hydroxyl groups in double-stranded DNA using NAD as a coenzyme and as the energy source for the reaction. It is essential for DNA replication and repair of damaged DNA. In Nitratidesulfovibrio vulgaris (strain DP4) (Desulfovibrio vulgaris), this protein is DNA ligase 1.